We begin with the raw amino-acid sequence, 122 residues long: Large ribosomal subunit protein uL14 (122 aa).

It belongs to the universal ribosomal protein uL14 family. In terms of assembly, part of the 50S ribosomal subunit. Forms a cluster with proteins L3 and L19. In the 70S ribosome, L14 and L19 interact and together make contacts with the 16S rRNA in bridges B5 and B8.

In terms of biological role, binds to 23S rRNA. Forms part of two intersubunit bridges in the 70S ribosome. The protein is Large ribosomal subunit protein uL14 of Parafrankia sp. (strain EAN1pec).